Here is a 130-residue protein sequence, read N- to C-terminus: Phosphoribosyl-AMP cyclohydrolase (130 aa).

A Mg(2+)-binding site is contributed by D80. Residue C81 coordinates Zn(2+). Positions 82 and 84 each coordinate Mg(2+). Positions 98 and 105 each coordinate Zn(2+).

Belongs to the PRA-CH family. Homodimer. The cofactor is Mg(2+). Zn(2+) is required as a cofactor.

The protein localises to the cytoplasm. The enzyme catalyses 1-(5-phospho-beta-D-ribosyl)-5'-AMP + H2O = 1-(5-phospho-beta-D-ribosyl)-5-[(5-phospho-beta-D-ribosylamino)methylideneamino]imidazole-4-carboxamide. Its pathway is amino-acid biosynthesis; L-histidine biosynthesis; L-histidine from 5-phospho-alpha-D-ribose 1-diphosphate: step 3/9. Its function is as follows. Catalyzes the hydrolysis of the adenine ring of phosphoribosyl-AMP. The polypeptide is Phosphoribosyl-AMP cyclohydrolase (Oleidesulfovibrio alaskensis (strain ATCC BAA-1058 / DSM 17464 / G20) (Desulfovibrio alaskensis)).